Consider the following 214-residue polypeptide: Leucyl/phenylalanyl-tRNA--protein transferase (214 aa).

This sequence belongs to the L/F-transferase family.

Its subcellular location is the cytoplasm. It catalyses the reaction N-terminal L-lysyl-[protein] + L-leucyl-tRNA(Leu) = N-terminal L-leucyl-L-lysyl-[protein] + tRNA(Leu) + H(+). The enzyme catalyses N-terminal L-arginyl-[protein] + L-leucyl-tRNA(Leu) = N-terminal L-leucyl-L-arginyl-[protein] + tRNA(Leu) + H(+). The catalysed reaction is L-phenylalanyl-tRNA(Phe) + an N-terminal L-alpha-aminoacyl-[protein] = an N-terminal L-phenylalanyl-L-alpha-aminoacyl-[protein] + tRNA(Phe). In terms of biological role, functions in the N-end rule pathway of protein degradation where it conjugates Leu, Phe and, less efficiently, Met from aminoacyl-tRNAs to the N-termini of proteins containing an N-terminal arginine or lysine. The protein is Leucyl/phenylalanyl-tRNA--protein transferase of Cereibacter sphaeroides (strain ATCC 17023 / DSM 158 / JCM 6121 / CCUG 31486 / LMG 2827 / NBRC 12203 / NCIMB 8253 / ATH 2.4.1.) (Rhodobacter sphaeroides).